Reading from the N-terminus, the 1196-residue chain is Nucleolar protein 6 (1196 aa).

Disordered regions lie at residues 1–75 (MPGK…VKPP) and 1140–1196 (KREQ…KALK). Basic and acidic residues predominate over residues 22-31 (HAEDHSDLEH). Over residues 1165 to 1174 (KPKKHRKRKG) the composition is skewed to basic residues.

Belongs to the NRAP family. In terms of assembly, part of the small subunit (SSU) processome, composed of more than 70 proteins and the RNA chaperone small nucleolar RNA (snoRNA) U3.

It is found in the nucleus. Its subcellular location is the nucleolus. The protein localises to the chromosome. Functionally, part of the small subunit (SSU) processome, first precursor of the small eukaryotic ribosomal subunit. During the assembly of the SSU processome in the nucleolus, many ribosome biogenesis factors, an RNA chaperone and ribosomal proteins associate with the nascent pre-rRNA and work in concert to generate RNA folding, modifications, rearrangements and cleavage as well as targeted degradation of pre-ribosomal RNA by the RNA exosome. The sequence is that of Nucleolar protein 6 from Drosophila sechellia (Fruit fly).